A 1050-amino-acid polypeptide reads, in one-letter code: NAD-specific glutamate dehydrogenase (1050 aa).

A disordered region spans residues 1 to 39 (MDSPSAPVPAHKLVDRLKDQTPRHPSPQPTHVSYPKVNG). The segment covering 12-22 (KLVDRLKDQTP) has biased composition (basic and acidic residues). Lys-594 is an active-site residue.

It belongs to the Glu/Leu/Phe/Val dehydrogenases family. As to quaternary structure, homotetramer.

The enzyme catalyses L-glutamate + NAD(+) + H2O = 2-oxoglutarate + NH4(+) + NADH + H(+). This chain is NAD-specific glutamate dehydrogenase (gdh-1), found in Neurospora crassa (strain ATCC 24698 / 74-OR23-1A / CBS 708.71 / DSM 1257 / FGSC 987).